The sequence spans 138 residues: Thyrotropin subunit beta (138 aa).

Positions 1 to 20 (MTAIFLMSVLFGLACGQAMS) are cleaved as a signal peptide. Intrachain disulfides connect cysteine 22-cysteine 72, cysteine 36-cysteine 87, cysteine 39-cysteine 125, cysteine 47-cysteine 103, cysteine 51-cysteine 105, and cysteine 108-cysteine 115. Asparagine 43 carries an N-linked (GlcNAc...) asparagine glycan. Positions 133–138 (VVGLSI) are excised as a propeptide.

It belongs to the glycoprotein hormones subunit beta family. As to quaternary structure, heterodimer of a common alpha chain and a unique beta chain which confers biological specificity to thyrotropin, lutropin, follitropin and gonadotropin.

The protein resides in the secreted. Functionally, indispensable for the control of thyroid structure and metabolism. This Lama glama (Llama) protein is Thyrotropin subunit beta (TSHB).